The sequence spans 428 residues: AP-1 complex subunit mu-1 (428 aa).

The MHD domain occupies 170–426; the sequence is KNEVFLDVIE…ITMAGEYELR (257 aa).

The protein belongs to the adaptor complexes medium subunit family. In terms of assembly, adaptor protein complex 1 (AP-1) is a heterotetramer composed of two large adaptins (gamma-type subunit and beta-type subunit), a medium adaptin (mu-type subunit) and a small adaptin (sigma-type subunit).

The protein localises to the golgi apparatus. It is found in the cytoplasmic vesicle. Its subcellular location is the clathrin-coated vesicle membrane. Subunit of clathrin-associated adaptor protein complex 1 that plays a role in protein sorting at the trans-Golgi network and early endosomes (TGN/EE). The AP complexes mediate the recruitment of clathrin to membranes and the recognition of sorting signals within the cytosolic tails of transmembrane cargo molecules. Functions redundantly with AP1M2 in multiple post-Golgi trafficking pathways leading from the TGN to the vacuole, the plasma membrane, and the cell-division plane. This is AP-1 complex subunit mu-1 (AP1M1) from Arabidopsis thaliana (Mouse-ear cress).